A 348-amino-acid chain; its full sequence is Dihydroorotase (348 aa).

Zn(2+)-binding residues include His-17 and His-19. Substrate is bound by residues 19-21 (HLR) and Asn-45. Zn(2+) is bound by residues Lys-103, His-140, and His-178. Lys-103 carries the post-translational modification N6-carboxylysine. His-140 is a binding site for substrate. Leu-223 is a binding site for substrate. Position 251 (Asp-251) interacts with Zn(2+). The active site involves Asp-251. His-255 and Ala-267 together coordinate substrate.

The protein belongs to the metallo-dependent hydrolases superfamily. DHOase family. Class II DHOase subfamily. As to quaternary structure, homodimer. Requires Zn(2+) as cofactor.

It carries out the reaction (S)-dihydroorotate + H2O = N-carbamoyl-L-aspartate + H(+). The protein operates within pyrimidine metabolism; UMP biosynthesis via de novo pathway; (S)-dihydroorotate from bicarbonate: step 3/3. Catalyzes the reversible cyclization of carbamoyl aspartate to dihydroorotate. The sequence is that of Dihydroorotase from Salmonella typhi.